A 231-amino-acid chain; its full sequence is Ion-translocating oxidoreductase complex subunit E (231 aa).

Transmembrane regions (helical) follow at residues 18 to 38 (ALVQLLGLCPLLAVTSTATNA), 39 to 59 (LGLGLATTLVLTLTNLTISTL), 63 to 83 (TPAEIRIPIYVMIIASVVSAV), 86 to 106 (LINAYAFGLYQSLGIFIPLIV), 125 to 145 (ALSALDGFSIGMGATCAMCVL), and 182 to 202 (PFLLAMLPPGAFIGLGLMLAG).

Belongs to the NqrDE/RnfAE family. In terms of assembly, the complex is composed of six subunits: RsxA, RsxB, RsxC, RsxD, RsxE and RsxG.

It localises to the cell inner membrane. Its function is as follows. Part of a membrane-bound complex that couples electron transfer with translocation of ions across the membrane. Required to maintain the reduced state of SoxR. The chain is Ion-translocating oxidoreductase complex subunit E from Escherichia coli (strain SMS-3-5 / SECEC).